Here is a 707-residue protein sequence, read N- to C-terminus: Transcription termination factor Rho (707 aa).

2 disordered regions span residues 1-38 (MSDT…RRGT) and 76-321 (QAAG…DEIQ). Composition is skewed to low complexity over residues 16–31 (AAAP…TGAG) and 76–93 (QAAG…ADTA). Residues 107–132 (RTGDEAPAEKAEKAGKADKKADKAAA) are compositionally biased toward basic and acidic residues. The segment covering 153–163 (ASAEQAAPADD) has biased composition (low complexity). The span at 176–188 (DAGSPSATDTTVA) shows a compositional bias: polar residues. A compositionally biased stretch (low complexity) spans 203-213 (QQSQGHQQGQG). A compositionally biased stretch (basic and acidic residues) spans 215–265 (ARSDAEGGDGRRRDRRDRGDRDRGDRGDRGDRGDRGDRGERGRDRRNKGDD). The segment covering 301 to 315 (RRGRRGRYRDRRGRR) has biased composition (basic residues). The Rho RNA-BD domain maps to 331-406 (LIPVAGILDI…VRLDSVNGMA (76 aa)). ATP is bound by residues 449–454 (GKGQRG), 461–466 (KTGKTM), and Arg492.

It belongs to the Rho family. Homohexamer. The homohexamer assembles into an open ring structure.

Its function is as follows. Facilitates transcription termination by a mechanism that involves Rho binding to the nascent RNA, activation of Rho's RNA-dependent ATPase activity, and release of the mRNA from the DNA template. The polypeptide is Transcription termination factor Rho (Streptomyces lividans).